A 235-amino-acid chain; its full sequence is Secreted RxLR effector protein 27 (235 aa).

The first 25 residues, 1 to 25 (MTNLFTRHTRRSLTALALLSGGVYA), serve as a signal peptide directing secretion. The short motif at 36–60 (RSLRVFVTGGQVLWDYRIHFKGIER) is the RxLR-dEER element.

This sequence belongs to the RxLR effector family.

It localises to the secreted. The protein resides in the host cytoplasm. It is found in the host nucleus. Its function is as follows. Effector that acts as a broad suppressor of cell death to interrupt plant immunity. Inhibits cell death induced by cell death-inducing proteins, including the PAMP elicitor INF1 from P.infestans. The protein is Secreted RxLR effector protein 27 of Plasmopara viticola (Downy mildew of grapevine).